Reading from the N-terminus, the 400-residue chain is Inositol polyphosphate 1-phosphatase (400 aa).

Residue Asp54 participates in Li(+) binding. Glu79 is a binding site for Mg(2+). Li(+) is bound at residue Glu80. Mg(2+) contacts are provided by Asp153 and Ile155. Asp156, Ser157, and Thr158 together coordinate 1D-myo-inositol 1,4-bisphosphate. Residues Ser238–Gly257 are compositionally biased toward polar residues. The disordered stretch occupies residues Ser238–Ser258. 1D-myo-inositol 1,4-bisphosphate-binding residues include Ser268, Lys270, Gly290, Ala291, Lys294, and Thr312. Mg(2+) is bound at residue Asp317. Ser318 is subject to Phosphoserine.

It belongs to the inositol monophosphatase superfamily. In terms of assembly, monomer. The cofactor is Mg(2+).

It catalyses the reaction 1D-myo-inositol 1,4-bisphosphate + H2O = 1D-myo-inositol 4-phosphate + phosphate. The enzyme catalyses 1D-myo-inositol 1,3,4-trisphosphate + H2O = 1D-myo-inositol 3,4-bisphosphate + phosphate. It functions in the pathway signal transduction; phosphatidylinositol signaling pathway. With respect to regulation, inhibited by Li(+). In terms of biological role, mg(2+)-dependent phosphatase that catalyzes the hydrolysis of the 1-position phosphate from inositol 1,4-bisphosphate and inositol 1,3,4-trisphosphate and participates in inositol phosphate metabolism. The chain is Inositol polyphosphate 1-phosphatase from Bos taurus (Bovine).